The following is a 145-amino-acid chain: Peptide methionine sulfoxide reductase MsrB (145 aa).

The MsrB domain maps to Lys-6–Val-129. The active-site Nucleophile is the Cys-118.

This sequence belongs to the MsrB Met sulfoxide reductase family.

The catalysed reaction is L-methionyl-[protein] + [thioredoxin]-disulfide + H2O = L-methionyl-(R)-S-oxide-[protein] + [thioredoxin]-dithiol. The chain is Peptide methionine sulfoxide reductase MsrB from Listeria monocytogenes serovar 1/2a (strain ATCC BAA-679 / EGD-e).